A 535-amino-acid chain; its full sequence is Triacylglyceride transporter MHAS_02168/C731_2106 (535 aa).

At 1 to 18 the chain is on the cytoplasmic side; that stretch reads MAFPQTPNRLIRPRRTSR. Residues 19–39 traverse the membrane as a helical segment; sequence GIAISAGGLAVLLGALDTYVV. At 40-60 the chain is on the periplasmic side; sequence VSIVTDIMRDVGIAVNQIQRV. The helical transmembrane segment at 61 to 82 threads the bilayer; sequence TPIITGYLLGYIAAMPLLGRAS. Residues 83-86 are Cytoplasmic-facing; sequence DRFG. A helical transmembrane segment spans residues 87–107; the sequence is RKLLIQISLAGFALGSVITAL. The Periplasmic portion of the chain corresponds to 108 to 111; that stretch reads ATNL. A helical transmembrane segment spans residues 112-136; that stretch reads DVLVAGRVIQGAASGALLPVTLALA. Over 137-145 the chain is Cytoplasmic; the sequence is ADLWATHKR. A helical membrane pass occupies residues 146-167; the sequence is AAVLGGVGAAQELGAVLGPIYG. Residues 168–177 lie on the Periplasmic side of the membrane; sequence IFVVWLFHHW. Residues 178–198 traverse the membrane as a helical segment; that stretch reads QAVFWVNVPLALIAMVLIHIS. At 199–212 the chain is on the cytoplasmic side; the sequence is LPPRVRTEEPQRVD. The helical transmembrane segment at 213–230 threads the bilayer; it reads VTGGLLLALALGLATIGL. Residues 231–243 are Periplasmic-facing; the sequence is YNAEPDGKQVLPE. The chain crosses the membrane as a helical span at residues 244–263; sequence YGPPLIIGAVIAAVAFLVWE. Over 264-278 the chain is Cytoplasmic; sequence RFARTRLLDPAGVRF. The chain crosses the membrane as a helical span at residues 279–300; the sequence is RPFLIALLVSLVTGGALMVTLV. At 301–320 the chain is on the periplasmic side; the sequence is NVELFGQGVLGLDQDEAVFL. A run of 2 helical transmembrane segments spans residues 321-343 and 344-364; these read LARF…TRVG and DRAV…LIAQ. At 365–384 the chain is on the periplasmic side; sequence WPADVLESRHDLGFVSLPTL. Residues 373–382 are beta-hairpin; that stretch reads RHDLGFVSLP. Residues 385 to 407 traverse the membrane as a helical segment; sequence DTDLAIAGFGLGLVIAPLTSAAL. Over 408–415 the chain is Cytoplasmic; that stretch reads RVVPAAQH. A helical membrane pass occupies residues 416–440; that stretch reads GIASAAVVVARMIGMLIGIAALSAW. The Periplasmic segment spans residues 441–487; the sequence is GLYRFNQYLKEQLAALPPAPADFPGGQMAGQMMRLRTATVQAYVLQY. A helical transmembrane segment spans residues 488–507; sequence GEIFAITAGLCVFGAVLGLF. At 508–535 the chain is on the cytoplasmic side; sequence IAGRREHAEESADAVDGVSNARDRAPSA.

The protein belongs to the major facilitator superfamily. P55 (TC 2.A.1.3.34) family.

The protein resides in the cell inner membrane. Functionally, in association with lipoprotein LprG transports triacylglycerides (TAG) across the inner cell membrane, probably transfering them to lipoprotein LprG in the periplasm. TAG probably regulates lipid metabolism and growth regulation and plays a structural role in the outer membrane. Mutagenesis and molecular modeling suggests TAG (and maybe other lipids) enters the central cavity of the P55 transporter from within the cell inner membrane via clefts on the cytoplasmic face of P55 between TM5-TM8 and TM2-TM11. From there the lipid is probably transferred to the hydrophobic cavity of LprG. The lprG-MHAS_02167/C731_2107 operon complements the vancomycin sensitivity of an M.smegmatis knockout of the same operon. Probably required with LprG for normal surface localization of lipoarabinomannan (LAM). In Mycolicibacterium hassiacum (strain DSM 44199 / CIP 105218 / JCM 12690 / 3849) (Mycobacterium hassiacum), this protein is Triacylglyceride transporter MHAS_02168/C731_2106.